Reading from the N-terminus, the 338-residue chain is Mitoferrin-1 (338 aa).

Positions 1-42 (MELRSGSVGSQAVARRMDGDSRDGGGGKDATGSEDYENLPTS) are disordered. The segment covering 15–26 (RRMDGDSRDGGG) has biased composition (basic and acidic residues). Solcar repeat units follow at residues 43–131 (ASVS…MKRT), 141–225 (NSHL…LQEQ), and 232–326 (YNPQ…FKYF). Transmembrane regions (helical) follow at residues 45–64 (VSTH…SVMY), 106–125 (GVNV…FACY), 143–162 (HLAN…AVMN), 200–219 (SYTT…FITY), 234–253 (PQSH…AATT), and 301–320 (GIQA…WSVY).

It belongs to the mitochondrial carrier (TC 2.A.29) family. In terms of assembly, interacts with ACB10; this interaction stabilizes SLC25A37 and enhances the function of SLC25A37 to import mitochondrial iron during erythroid differentiation.

It is found in the mitochondrion inner membrane. The catalysed reaction is Fe(2+)(in) = Fe(2+)(out). Mitochondrial iron transporter that specifically mediates iron uptake in developing erythroid cells, thereby playing an essential role in heme biosynthesis. This is Mitoferrin-1 (SLC25A37) from Homo sapiens (Human).